The primary structure comprises 274 residues: STVLLFSSILLMLKNNLNNEINESFTSMIIMSALLLKSGAAPFHFWFPNMMEGLTWMNALMLMTWQKIAPLMLISYLNIKYLLLISVILSVIIGAIGGLNQTSLRKLMAFSSINHLGWMLSSLMFSESIWLIYFFFYSFLSFVLTFMFNIFKLFHLNQLFSWFVNSKILKFTLFMNFLSLGGLPPFLGFLPKWLVIQQLTLCNQYFLLTLMMMSTLITLFFYLRICYSAFMMNYFENNWIMKMNMISNNTNMYLIMTFFSIFGLFMISLFYFMF.

8 helical membrane passes run 28-48, 54-74, 79-99, 107-127, 128-148, 171-191, 206-226, and 254-274; these read MIIM…FWFP, LTWM…LMLI, IKYL…IGGL, LMAF…MFSE, SIWL…TFMF, FTLF…GFLP, FLLT…LRIC, and LIMT…YFMF.

It belongs to the complex I subunit 2 family.

It is found in the mitochondrion inner membrane. It carries out the reaction a ubiquinone + NADH + 5 H(+)(in) = a ubiquinol + NAD(+) + 4 H(+)(out). In terms of biological role, core subunit of the mitochondrial membrane respiratory chain NADH dehydrogenase (Complex I) that is believed to belong to the minimal assembly required for catalysis. Complex I functions in the transfer of electrons from NADH to the respiratory chain. The immediate electron acceptor for the enzyme is believed to be ubiquinone. The polypeptide is NADH-ubiquinone oxidoreductase chain 2 (mt:ND2) (Drosophila sechellia (Fruit fly)).